We begin with the raw amino-acid sequence, 349 residues long: Transcriptional repressor protein KorB (349 aa).

Disordered regions lie at residues 1-72 and 246-296; these read MSAK…SPES and RSHD…DKLK. Positions 25–40 are enriched in low complexity; sequence LGDLAGLLNEQPAANA. Basic and acidic residues-rich tracts occupy residues 246–256 and 279–296; these read RSHDDGDRDPN and DDAK…DKLK.

Belongs to the ParB family.

Functionally, in conjunction with KorA, inhibits the transcription of the kilA, trfA and korAB operons. Is also involved in the negative control of the kilB operon. In Escherichia coli, this protein is Transcriptional repressor protein KorB (korB).